An 808-amino-acid polypeptide reads, in one-letter code: Protein SEY1 (808 aa).

The disordered stretch occupies residues 1-21 (MSSELSEGELSHTSSSSSFVP). Residues 1–701 (MSSELSEGEL…KRSIVQHITQ (701 aa)) are Cytoplasmic-facing. The 230-residue stretch at 57–286 (GNNYHIISVF…VGDELFKPEY (230 aa)) folds into the GB1/RHD3-type G domain. 67 to 74 (GSQSTGKS) provides a ligand contact to GTP. Residues 702 to 722 (IPYYIYLVIVFLGWNEFMAII) form a helical membrane-spanning segment. The Lumenal portion of the chain corresponds to 723-725 (RNP). A helical transmembrane segment spans residues 726–746 (LLFSLALLLGASVYILYKLNL). The Cytoplasmic portion of the chain corresponds to 747 to 808 (LKPAIVVAQR…YSDNIELDDM (62 aa)).

It belongs to the TRAFAC class dynamin-like GTPase superfamily. GB1/RHD3 GTPase family. RHD3 subfamily.

Its subcellular location is the endoplasmic reticulum membrane. Functionally, cooperates with the reticulon proteins and tubule-shaping DP1 family proteins to generate and maintain the structure of the tubular endoplasmic reticulum network. Has GTPase activity, which is required for its function in ER organization. This Candida tropicalis (strain ATCC MYA-3404 / T1) (Yeast) protein is Protein SEY1.